Here is a 237-residue protein sequence, read N- to C-terminus: UPF0502 protein HEAR1280 (237 aa).

Residues M1–S13 show a composition bias toward polar residues. Positions M1–A21 are disordered.

This sequence belongs to the UPF0502 family.

The sequence is that of UPF0502 protein HEAR1280 from Herminiimonas arsenicoxydans.